The chain runs to 413 residues: Serine hydroxymethyltransferase (413 aa).

(6S)-5,6,7,8-tetrahydrofolate contacts are provided by residues leucine 115 and 119–121 (GHL). Lysine 224 carries the post-translational modification N6-(pyridoxal phosphate)lysine.

This sequence belongs to the SHMT family. Homodimer. Pyridoxal 5'-phosphate is required as a cofactor.

Its subcellular location is the cytoplasm. It catalyses the reaction (6R)-5,10-methylene-5,6,7,8-tetrahydrofolate + glycine + H2O = (6S)-5,6,7,8-tetrahydrofolate + L-serine. It participates in one-carbon metabolism; tetrahydrofolate interconversion. The protein operates within amino-acid biosynthesis; glycine biosynthesis; glycine from L-serine: step 1/1. Its function is as follows. Catalyzes the reversible interconversion of serine and glycine with tetrahydrofolate (THF) serving as the one-carbon carrier. This reaction serves as the major source of one-carbon groups required for the biosynthesis of purines, thymidylate, methionine, and other important biomolecules. Also exhibits THF-independent aldolase activity toward beta-hydroxyamino acids, producing glycine and aldehydes, via a retro-aldol mechanism. This chain is Serine hydroxymethyltransferase, found in Mycoplasma capricolum subsp. capricolum (strain California kid / ATCC 27343 / NCTC 10154).